We begin with the raw amino-acid sequence, 283 residues long: Pantothenate synthetase (283 aa).

30 to 37 (MGNLHNGH) provides a ligand contact to ATP. Histidine 37 (proton donor) is an active-site residue. Glutamine 61 contacts (R)-pantoate. Residue glutamine 61 participates in beta-alanine binding. 149–152 (GEKD) contacts ATP. Glutamine 155 provides a ligand contact to (R)-pantoate. 186–189 (LSSR) serves as a coordination point for ATP.

The protein belongs to the pantothenate synthetase family. Homodimer.

It is found in the cytoplasm. The enzyme catalyses (R)-pantoate + beta-alanine + ATP = (R)-pantothenate + AMP + diphosphate + H(+). The protein operates within cofactor biosynthesis; (R)-pantothenate biosynthesis; (R)-pantothenate from (R)-pantoate and beta-alanine: step 1/1. In terms of biological role, catalyzes the condensation of pantoate with beta-alanine in an ATP-dependent reaction via a pantoyl-adenylate intermediate. This Shigella flexneri serotype 5b (strain 8401) protein is Pantothenate synthetase.